Here is a 126-residue protein sequence, read N- to C-terminus: MIPGEILTGDDPVEINAGRPVRTVLVRNMGDRPVQVGSHYHFAAANPALDFDRASAWGHRLAVPAGTAVRFEPGVEREIELVPLAGARVVPGLRPESAGPLDAASGTRIADTATIEDISGFQGEGS.

The protein belongs to the urease beta subunit family. Heterotrimer of UreA (gamma), UreB (beta) and UreC (alpha) subunits. Three heterotrimers associate to form the active enzyme.

It is found in the cytoplasm. It catalyses the reaction urea + 2 H2O + H(+) = hydrogencarbonate + 2 NH4(+). The protein operates within nitrogen metabolism; urea degradation; CO(2) and NH(3) from urea (urease route): step 1/1. The protein is Urease subunit beta of Frankia casuarinae (strain DSM 45818 / CECT 9043 / HFP020203 / CcI3).